Reading from the N-terminus, the 498-residue chain is Aminotransferase swnA (498 aa).

It belongs to the class-I pyridoxal-phosphate-dependent aminotransferase family. It depends on pyridoxal 5'-phosphate as a cofactor.

The protein operates within mycotoxin biosynthesis. Its function is as follows. Aminotransferase; part of the gene cluster that mediates the biosynthesis of swainsonine (SW), a cytotoxic fungal alkaloid and a potential cancer therapy drug. Swainsonine production occurs via a multibranched pathway and is dispensable for fungal colonization of plants and infection of insect hosts. The first step of swainsonine biosynthesis is the production of the precursor pipecolic acid (PA) via conversion of L-lysine (Lys) to 1-piperideine-6-carboxylate (P6C) by the aminotransferase swnA, the latter being further reduced to PA by the reductase swnR. PA can be converted from lysine by both the SW biosynthetic cluster and the unclustered genes such as lysine cyclodeaminase. The PKS-NRPS hybrid synthetase swnK uptakes and condensates PA and malonyl-CoA with and without skipping of the ketoreductase (KR) domain in order to produce 3 intermediates, 1-oxoindolizidine, (1S)-1-hydroxyindolizin, and (1R)-1-hydroxyindolizine; with the transisomer (1S)-1-hydroxyindolizin being predominant. The terminal thioester reductase (TE) domain of swnK is involved in reduction of the thioester bond to release the intermediate aldehydes. The oxidoreductase swnN could contribute to the reduction of 1-oxoindolizidine to (1S)-1-hydroxyindolizin and (1R)-1-hydroxyindolizine, contributing to the major route of SW production. The dioxygenase swnH2 would be responsible for the oxidization of (1R)-1-hydroxyindolizine into (1R,2S)-1,2-dihydroxyindolizine and of (1S)-1-hydroxyindolizin to yield both (1R,2S)-1,2-dihydroxyindolizine and (1S,2S)-1,2-dihydroxyindolizine. The dioxygenase swnH1 then performs the conversion of the 1,2-dihydroxyindolizine epimers to SW. This chain is Aminotransferase swnA, found in Metarhizium robertsii (strain ARSEF 23 / ATCC MYA-3075) (Metarhizium anisopliae (strain ARSEF 23)).